The following is a 451-amino-acid chain: Sensor histidine kinase CssS (451 aa).

Residues 1–9 are Cytoplasmic-facing; sequence MKNKPLAFQ. The chain crosses the membrane as a helical span at residues 10-30; that stretch reads IWVVISGILLAISILLLVLFS. The Extracellular segment spans residues 31–165; that stretch reads NTLRDFFTNE…RDDLAYTLFK (135 aa). A helical membrane pass occupies residues 166-186; the sequence is QLLFIIAVVILLSWIPAIWLA. The region spanning 187 to 239 is the HAMP domain; the sequence is KYLSRPLVSFEKHVKRISEQDWDDPVKVDRKDEIGKLGHTIEEMRQKLVQKDE. The Cytoplasmic segment spans residues 187–451; it reads KYLSRPLVSF…GVTYRIAVPK (265 aa). The Histidine kinase domain occupies 247–451; it reads NISHDLKTPV…GVTYRIAVPK (205 aa). His-250 carries the post-translational modification Phosphohistidine; by autocatalysis.

It is found in the cell membrane. It carries out the reaction ATP + protein L-histidine = ADP + protein N-phospho-L-histidine.. Member of the two-component regulatory system CssS/CssR required to control the cellular response to secretion stress. Required for the transcription of htrA. Could detect misfolded proteins at the membrane-cell wall interface and then activate CssR by phosphorylation. The protein is Sensor histidine kinase CssS (cssS) of Bacillus subtilis (strain 168).